The chain runs to 468 residues: Probable 1,4-beta-D-glucan cellobiohydrolase C (468 aa).

Positions 1–18 (MGRVSSLALALLLPAVQA) are cleaved as a signal peptide. Residues 19–54 (QQTLWGQCGGIGWTGPTNCVAGAACSTQNPYYAQCL) form the CBM1 domain. 2 disulfides stabilise this stretch: C26–C43 and C37–C53. The tract at residues 57–106 (TATTSTTLTTTTRVTTTTTSTTSKSSSTGSTTTTKSTGTTTTSGSSTTIT) is thr-rich linker. The tract at residues 68–107 (TRVTTTTTSTTSKSSSTGSTTTTKSTGTTTTSGSSTTITS) is disordered. The segment at 107 to 468 (SAPSGNPFSG…QLLKNANPAF (362 aa)) is catalytic. D198 is an active-site residue. Disulfide bonds link C199-C258 and C390-C437. Residue D244 is the Proton donor of the active site. Residue D423 is the Nucleophile of the active site.

Belongs to the glycosyl hydrolase 6 (cellulase B) family.

Its subcellular location is the secreted. The catalysed reaction is Hydrolysis of (1-&gt;4)-beta-D-glucosidic linkages in cellulose and cellotetraose, releasing cellobiose from the non-reducing ends of the chains.. Functionally, the biological conversion of cellulose to glucose generally requires three types of hydrolytic enzymes: (1) Endoglucanases which cut internal beta-1,4-glucosidic bonds; (2) Exocellobiohydrolases that cut the disaccharide cellobiose from the non-reducing end of the cellulose polymer chain; (3) Beta-1,4-glucosidases which hydrolyze the cellobiose and other short cello-oligosaccharides to glucose. In Aspergillus terreus (strain NIH 2624 / FGSC A1156), this protein is Probable 1,4-beta-D-glucan cellobiohydrolase C (cbhC).